A 548-amino-acid chain; its full sequence is MKHLHDLPAWSKLWNHFDDSKTLHMREMFEQDPQRAERYWLQVGGLTLDYSKNRINDETMSLLFELAHEAGVPERMRQMFHGKKINTTENRAVLHVALRNRTNSPIVVDGEDVMPKVNRVLQRMGEFAHEVRSGSWLGYTNQVITDVVNIGIGGSDLGPLMMCTALKPFGHPRLNMHFVSNVDGSQLRDVLSKVHPETTLFIIASKTFTTQETLTNALTAREWFLNHAGDEEAVAKHFAAVSTNQKAVAEFGIDTANMFEFWDWVGGRYSLWSAIGLPIMLYLGEENFIEMLNGAHLMDQHFINTPLERNLPVILALIGIWYINYYGGGSHVIAPYDQHLHRLPKFIQQLDMESNGKQVTLDGKAVGHETSPIIWGETGINGQHAFFQLLHQGTHITPIDLIASLEKRSNLPGHHEILLANVFAQAEAFMRGKTPDEVRAELKAQGMDEARIEELVPHKTFSGNRPTNLILMDKVNPRNMGSLIAMYEHKTFVQGIIWGINSFDQWGVELGKQLAKTILGELTGETGSQKHDSSTERLINLYLQTNRK.

The active-site Proton donor is the E353. Active-site residues include H384 and K512.

It belongs to the GPI family.

Its subcellular location is the cytoplasm. The catalysed reaction is alpha-D-glucose 6-phosphate = beta-D-fructose 6-phosphate. Its pathway is carbohydrate biosynthesis; gluconeogenesis. The protein operates within carbohydrate degradation; glycolysis; D-glyceraldehyde 3-phosphate and glycerone phosphate from D-glucose: step 2/4. Its function is as follows. Catalyzes the reversible isomerization of glucose-6-phosphate to fructose-6-phosphate. This Neisseria meningitidis serogroup A / serotype 4A (strain DSM 15465 / Z2491) protein is Glucose-6-phosphate isomerase 1.